The chain runs to 396 residues: G-protein coupled receptor 84 (396 aa).

The Extracellular portion of the chain corresponds to Met1–Tyr21. N-linked (GlcNAc...) asparagine glycosylation is found at Asn3 and Asn8. Residues Phe22–Leu42 form a helical membrane-spanning segment. Over Leu43–Leu57 the chain is Cytoplasmic. The chain crosses the membrane as a helical span at residues Leu58–Val78. The Extracellular segment spans residues Asp79–Arg94. The helical transmembrane segment at Ile95–Ala115 threads the bilayer. The Cytoplasmic portion of the chain corresponds to Leu116 to Lys135. Residues Gly136 to Trp156 form a helical membrane-spanning segment. Residues Asn157–Thr180 lie on the Extracellular side of the membrane. Residues Ile181 to Ile201 form a helical membrane-spanning segment. Topologically, residues His202–Met320 are cytoplasmic. Residues Ser221 and Ser224 each carry the phosphoserine modification. The disordered stretch occupies residues Leu241–Ala310. Residues Gly253–Gly269 show a composition bias toward polar residues. Phosphothreonine is present on residues Thr263 and Thr264. A compositionally biased stretch (basic and acidic residues) spans Ser290 to Thr308. The chain crosses the membrane as a helical span at residues Cys321 to Leu341. Residues Asp342 to His352 are Extracellular-facing. Residues Met353–Met373 form a helical membrane-spanning segment. Residues Asn374 to His396 are Cytoplasmic-facing.

This sequence belongs to the G-protein coupled receptor 1 family. Interacts with ARRB2 and ARR3. In terms of processing, phosphorylated by a subset of GPR84-activating ligands. Constitutively phosphorylated at Ser-221 and Ser-224 in the absence of 2-HTP. By contrast, Thr-263 and Thr-264 are phosphorylated only following prior cell treatment with 2-HTP. As to expression, expressed predominantly in hematopoietic tissues. Expressed mainly in the bone marrow with transcripts also detected in spleen, the lymph node, liver and the lung.

It is found in the cell membrane. In terms of biological role, g protein-coupled receptor that responds endogenously to dietary fatty acids or nutrient, specifically medium-chain free fatty acid (FFA) with carbon chain lengths of C9 to C14. Capric acid (C10:0), undecanoic acid (C11:0) and lauric acid (C12:0) are the most potent agonists. In immune cells, functions as a pro-inflammatory receptor via 6-OAU and promotes the expression of pro-inflammatory mediators such as TNFalpha, IL-6 and IL-12B as well as stimulating chemotactic responses through activation of signaling mediators AKT, ERK and NF-kappa-B (by sim). In addition, triggers increased bacterial adhesion and phagocytosis in macrophages and regulates pro-inflammatory function via enhancing NLRP3 inflammasome activation. Also plays an important role in inflammation by modulating neutrophil functions. Mechanistically, promotes neutrophil chemotaxis, reactive oxygen species (ROS) production and degranulation via LYN-AKT/ERK pathway. To regulate ROS production, communicates with the two formyl peptide receptors FPR2 and FPR1 to control the NADPH oxidase activity in neutrophils. In Mus musculus (Mouse), this protein is G-protein coupled receptor 84 (Gpr84).